Consider the following 857-residue polypeptide: DNA gyrase subunit A (857 aa).

The Topo IIA-type catalytic domain occupies 39 to 507 (LPDVRDGLKP…YEGDMSIEDL (469 aa)). Catalysis depends on Y127, which acts as the O-(5'-phospho-DNA)-tyrosine intermediate. A GyrA-box motif is present at residues 534–540 (QKRGGKG). The tract at residues 825–857 (REAEEVDGDVAVDETAEGAATTGTDEGEAPSAE) is disordered. Positions 828–840 (EEVDGDVAVDETA) are enriched in acidic residues.

The protein belongs to the type II topoisomerase GyrA/ParC subunit family. As to quaternary structure, heterotetramer, composed of two GyrA and two GyrB chains. In the heterotetramer, GyrA contains the active site tyrosine that forms a transient covalent intermediate with DNA, while GyrB binds cofactors and catalyzes ATP hydrolysis.

The protein localises to the cytoplasm. The enzyme catalyses ATP-dependent breakage, passage and rejoining of double-stranded DNA.. A type II topoisomerase that negatively supercoils closed circular double-stranded (ds) DNA in an ATP-dependent manner to modulate DNA topology and maintain chromosomes in an underwound state. Negative supercoiling favors strand separation, and DNA replication, transcription, recombination and repair, all of which involve strand separation. Also able to catalyze the interconversion of other topological isomers of dsDNA rings, including catenanes and knotted rings. Type II topoisomerases break and join 2 DNA strands simultaneously in an ATP-dependent manner. The polypeptide is DNA gyrase subunit A (Streptomyces coelicolor (strain ATCC BAA-471 / A3(2) / M145)).